The following is a 166-amino-acid chain: Sec-independent protein translocase protein TatB (166 aa).

A helical transmembrane segment spans residues 2–22; that stretch reads FDGIGFMELLLIGVLGLVVLG. Residues 69–166 form a disordered region; that stretch reads SKGLSNLSPE…DTRSNPKANG (98 aa). 2 stretches are compositionally biased toward polar residues: residues 88 to 97 and 112 to 132; these read QAAQSVNRPY and QIYS…SQAN. Residues 133-153 show a composition bias toward low complexity; the sequence is PTATVEASPAPASPATPSEPS. Over residues 155–166 the composition is skewed to polar residues; it reads GADTRSNPKANG.

This sequence belongs to the TatB family. In terms of assembly, the Tat system comprises two distinct complexes: a TatABC complex, containing multiple copies of TatA, TatB and TatC subunits, and a separate TatA complex, containing only TatA subunits. Substrates initially bind to the TatABC complex, which probably triggers association of the separate TatA complex to form the active translocon.

The protein localises to the cell inner membrane. Functionally, part of the twin-arginine translocation (Tat) system that transports large folded proteins containing a characteristic twin-arginine motif in their signal peptide across membranes. Together with TatC, TatB is part of a receptor directly interacting with Tat signal peptides. TatB may form an oligomeric binding site that transiently accommodates folded Tat precursor proteins before their translocation. This Shewanella baltica (strain OS155 / ATCC BAA-1091) protein is Sec-independent protein translocase protein TatB.